The following is a 140-amino-acid chain: Nucleoside diphosphate kinase (140 aa).

The ATP site is built by lysine 11, phenylalanine 59, arginine 87, threonine 93, arginine 104, and asparagine 114. The Pros-phosphohistidine intermediate role is filled by histidine 117.

It belongs to the NDK family. Homotetramer. Requires Mg(2+) as cofactor.

The protein localises to the cytoplasm. The enzyme catalyses a 2'-deoxyribonucleoside 5'-diphosphate + ATP = a 2'-deoxyribonucleoside 5'-triphosphate + ADP. The catalysed reaction is a ribonucleoside 5'-diphosphate + ATP = a ribonucleoside 5'-triphosphate + ADP. In terms of biological role, major role in the synthesis of nucleoside triphosphates other than ATP. The ATP gamma phosphate is transferred to the NDP beta phosphate via a ping-pong mechanism, using a phosphorylated active-site intermediate. This Azorhizobium caulinodans (strain ATCC 43989 / DSM 5975 / JCM 20966 / LMG 6465 / NBRC 14845 / NCIMB 13405 / ORS 571) protein is Nucleoside diphosphate kinase.